A 179-amino-acid chain; its full sequence is Negative modulator of initiation of replication (179 aa).

It belongs to the SeqA family. As to quaternary structure, homodimer. Polymerizes to form helical filaments.

It is found in the cytoplasm. In terms of biological role, negative regulator of replication initiation, which contributes to regulation of DNA replication and ensures that replication initiation occurs exactly once per chromosome per cell cycle. Binds to pairs of hemimethylated GATC sequences in the oriC region, thus preventing assembly of replication proteins and re-initiation at newly replicated origins. Repression is relieved when the region becomes fully methylated. The chain is Negative modulator of initiation of replication from Vibrio atlanticus (strain LGP32) (Vibrio splendidus (strain Mel32)).